Here is a 207-residue protein sequence, read N- to C-terminus: Cytochrome c biogenesis ATP-binding export protein CcmA (207 aa).

The 204-residue stretch at 4 to 207 folds into the ABC transporter domain; that stretch reads LEVRELLCER…RISLTQTRAV (204 aa). 36-43 provides a ligand contact to ATP; the sequence is GSNGAGKT.

This sequence belongs to the ABC transporter superfamily. CcmA exporter (TC 3.A.1.107) family. As to quaternary structure, the complex is composed of two ATP-binding proteins (CcmA) and two transmembrane proteins (CcmB).

Its subcellular location is the cell inner membrane. It catalyses the reaction heme b(in) + ATP + H2O = heme b(out) + ADP + phosphate + H(+). Functionally, part of the ABC transporter complex CcmAB involved in the biogenesis of c-type cytochromes; once thought to export heme, this seems not to be the case, but its exact role is uncertain. Responsible for energy coupling to the transport system. The protein is Cytochrome c biogenesis ATP-binding export protein CcmA of Shigella dysenteriae serotype 1 (strain Sd197).